The sequence spans 196 residues: MERLEKQFFIIPTLQLATALLGKTFVRILPGNRVLKGRIVETEAYLGEGDEASHAWRGKTDRNAPMFEAPGTLYVYFVYGCHHLVNIVSEPRETAGAVLLRAMEPLEGQGFMERQRGTASASDLMSGPAKIAQALDINRSHSGSDLFSGEFFLENAPRIPENQIGTSSRIGISRGRELQWRKFVIGSPHLSQGQPS.

This sequence belongs to the DNA glycosylase MPG family.

This chain is Putative 3-methyladenine DNA glycosylase, found in Chlorobium phaeovibrioides (strain DSM 265 / 1930) (Prosthecochloris vibrioformis (strain DSM 265)).